Consider the following 191-residue polypeptide: Pyridoxal 5'-phosphate synthase subunit PdxT (191 aa).

46-48 (GES) provides a ligand contact to L-glutamine. Catalysis depends on Cys-75, which acts as the Nucleophile. L-glutamine is bound by residues Arg-101 and 129-130 (IR). Active-site charge relay system residues include His-165 and Glu-167.

It belongs to the glutaminase PdxT/SNO family. In terms of assembly, in the presence of PdxS, forms a dodecamer of heterodimers. Only shows activity in the heterodimer.

It carries out the reaction aldehydo-D-ribose 5-phosphate + D-glyceraldehyde 3-phosphate + L-glutamine = pyridoxal 5'-phosphate + L-glutamate + phosphate + 3 H2O + H(+). The catalysed reaction is L-glutamine + H2O = L-glutamate + NH4(+). Its pathway is cofactor biosynthesis; pyridoxal 5'-phosphate biosynthesis. Its function is as follows. Catalyzes the hydrolysis of glutamine to glutamate and ammonia as part of the biosynthesis of pyridoxal 5'-phosphate. The resulting ammonia molecule is channeled to the active site of PdxS. In Staphylococcus saprophyticus subsp. saprophyticus (strain ATCC 15305 / DSM 20229 / NCIMB 8711 / NCTC 7292 / S-41), this protein is Pyridoxal 5'-phosphate synthase subunit PdxT.